Consider the following 445-residue polypeptide: MMYQPELETLPREKLRALQEERLKRLVAYVYERVPFYRRLLDEAGVDPKGFRGLEDLPRIPFTKKTDLRDHYPFGLFAVPREEVARVHASSGTTGKPTVVGYTKNDLKVFAEVVARSLAAAGARPGMMLHNAYGYGLFTGGLGLHGGAEALGMTVVPVSGGMTERQVMLIQDFRPEVISCTPSYAQTLAEEFRKRGVSPEELSLEYAVLGAEPWTEAIRKQVDEGLGVKSTNIYGLSEIIGPGVSNECVEERQGSHIWEDHFLPEVVDPDTGEPLPEGKVGVLVFTTLTKEAMPLLRYWTGDLTFLTYEACTCGRTHVRMGPILGRTDDMLIIRGVNVYPTQVEAVLLAIPEVVPHYQIVVRREGTLDEAELKVEVSEPFFREIGQEVLSDEVVEADHRLHALRERIARKIKDNVGVTLKVTLLPPGQAPRSEGGKLRRVLDLRK.

Belongs to the phenylacetyl-CoA ligase family. In terms of assembly, monomer.

The catalysed reaction is 2-phenylacetate + ATP + CoA = phenylacetyl-CoA + AMP + diphosphate. Its pathway is aromatic compound metabolism; phenylacetate degradation. Its function is as follows. Catalyzes the activation of phenylacetic acid (PA) to phenylacetyl-CoA (PA-CoA). Involved in the phenylalanine metabolism. The polypeptide is Phenylacetate-coenzyme A ligase (Thermus thermophilus (strain ATCC BAA-163 / DSM 7039 / HB27)).